Reading from the N-terminus, the 282-residue chain is Transcription factor HES-1 (282 aa).

The tract at residues Met-1–Lys-44 is disordered. Residues Ser-10–Val-21 show a composition bias toward low complexity. Over residues Asp-26–Arg-35 the composition is skewed to basic and acidic residues. In terms of domain architecture, bHLH spans His-34–Leu-91. One can recognise an Orange domain in the interval Tyr-110–Leu-143. Disordered regions lie at residues Gln-158–Pro-204 and Thr-256–Asn-282. Pro residues-rich tracts occupy residues Gln-164–Pro-174 and Phe-182–Ser-202. The segment covering Ser-264 to Ser-275 has biased composition (low complexity). Residues Trp-277–Trp-280 carry the WRPW motif motif.

As to quaternary structure, interacts with SIRT1. Transcription repression requires formation of a complex with a corepressor protein of the Groucho/TLE family. Interacts (via WPRW motif) with TLE1, and more weakly with TLE2. Interacts with HES6. Interacts with an FA complex, composed of FANCA, FANCF, FANCG and FANCL, but not of FANCC, nor FANCE. As to expression, expressed at high levels in undifferentiated neural precursor cells, but the level of expression decreases as neural differentiation proceeds.

Its subcellular location is the nucleus. Transcriptional repressor of genes that require a bHLH protein for their transcription. May act as a negative regulator of myogenesis by inhibiting the functions of MYOD1 and ASH1. Binds DNA on N-box motifs: 5'-CACNAG-3' with high affinity and on E-box motifs: 5'-CANNTG-3' with low affinity. May play a role in a functional FA core complex response to DNA cross-link damage, being required for the stability and nuclear localization of FA core complex proteins, as well as for FANCD2 monoubiquitination in response to DNA damage. The chain is Transcription factor HES-1 (Hes1) from Mus musculus (Mouse).